The following is a 329-amino-acid chain: Telomeric repeat-binding factor 2-interacting protein 1 (329 aa).

Positions 63–86 (AVSTDYVVACVESQRRLPLDLYRH) constitute a BRCT domain. The 60-residue stretch at 94-153 (ASPRGRLPFTEAEDAALLRAVRERSGAPRVSGTALWKELECTGLTRHSWQAMRDRYLRHL) folds into the Myb-like domain. The segment at 179-206 (EFESSESGSDTSDTPDELPLQNGEGTFP) is disordered. A Nuclear localization signal motif is present at residues 313 to 329 (AKFGAENVARRVAFRKS).

This sequence belongs to the RAP1 family. In terms of assembly, homodimer. Component of the shelterin complex (telosome). Interacts with terf2; the interaction is direct.

The protein localises to the nucleus. It is found in the chromosome. It localises to the telomere. Acts both as a regulator of telomere function and as a transcription regulator. Involved in the regulation of telomere length and protection as a component of the shelterin complex (telosome). Does not bind DNA directly: recruited to telomeric double-stranded 5'-TTAGGG-3' repeats via its interaction with terf2. Independently of its function in telomeres, also acts as a transcription regulator: recruited to extratelomeric 5'-TTAGGG-3' sites via its association with terf2 or other factors, and regulates gene expression. The polypeptide is Telomeric repeat-binding factor 2-interacting protein 1 (TERF2IP) (Gallus gallus (Chicken)).